The chain runs to 78 residues: RNA-binding protein KhpA (78 aa).

The 50-residue stretch at 29-78 (TIIYELSVAKPDIGKIIGKEGRTIKAIRTLLVSVASRNNVRVSLEIMEEK) folds into the KH domain.

The protein belongs to the KhpA RNA-binding protein family.

It is found in the cytoplasm. In terms of biological role, a probable RNA-binding protein. In Chlamydia pneumoniae (Chlamydophila pneumoniae), this protein is RNA-binding protein KhpA.